Consider the following 72-residue polypeptide: Penaeidin-2b (72 aa).

A signal peptide spans 1-21; the sequence is MRLVVCLVFLASFALVCQGEA. Intrachain disulfides connect Cys45-Cys59, Cys48-Cys66, and Cys60-Cys67. The residue at position 71 (Lys71) is a Lysine amide.

This sequence belongs to the penaeidin family.

It is found in the cytoplasmic granule. Antibacterial and antifungal activity. Presents chitin-binding activity. This Penaeus vannamei (Whiteleg shrimp) protein is Penaeidin-2b.